The primary structure comprises 180 residues: Major urinary protein 6 (180 aa).

The first 18 residues, 1-18 (MKMLLLLCLGLTLVCVHA), serve as a signal peptide directing secretion. Cys82 and Cys175 are disulfide-bonded.

Belongs to the calycin superfamily. Lipocalin family. As to expression, abundant in the urine of adult male mice but absent from that of females.

It is found in the secreted. Binds pheromones that are released from drying urine of males. These pheromones affect the sexual behavior of females. The polypeptide is Major urinary protein 6 (Mup6) (Mus musculus (Mouse)).